The sequence spans 160 residues: S-ribosylhomocysteine lyase (160 aa).

His-57, His-61, and Cys-127 together coordinate Fe cation.

The protein belongs to the LuxS family. In terms of assembly, homodimer. It depends on Fe cation as a cofactor.

It carries out the reaction S-(5-deoxy-D-ribos-5-yl)-L-homocysteine = (S)-4,5-dihydroxypentane-2,3-dione + L-homocysteine. Its function is as follows. Involved in the synthesis of autoinducer 2 (AI-2) which is secreted by bacteria and is used to communicate both the cell density and the metabolic potential of the environment. The regulation of gene expression in response to changes in cell density is called quorum sensing. Catalyzes the transformation of S-ribosylhomocysteine (RHC) to homocysteine (HC) and 4,5-dihydroxy-2,3-pentadione (DPD). The sequence is that of S-ribosylhomocysteine lyase from Streptococcus sanguinis (strain SK36).